A 171-amino-acid chain; its full sequence is Secreted LysM effector Blys4 (171 aa).

The 45-residue stretch at 125–169 folds into the LysM domain; sequence KPYTIHQGDTCWDIAESHSVGVDDILTLNPELDCDKLSIGSQICL.

It belongs to the secreted LysM effector family.

Might have a role in sequestration of chitin oligosaccharides (breakdown products of fungal cell walls that are released during invasion and act as triggers of host immunity) to dampen host defense. The protein is Secreted LysM effector Blys4 of Beauveria bassiana (strain ARSEF 2860) (White muscardine disease fungus).